A 407-amino-acid chain; its full sequence is Elongation factor Tu (407 aa).

Residues 10 to 217 (KPHVNVGTIG…ALDSYIPEPE (208 aa)) form the tr-type G domain. The G1 stretch occupies residues 19-26 (GHVDHGKT). 19-26 (GHVDHGKT) is a GTP binding site. Thr26 contacts Mg(2+). The tract at residues 60–64 (GITIA) is G2. The G3 stretch occupies residues 81–84 (DCPG). Residues 81-85 (DCPGH) and 136-139 (NKAD) each bind GTP. Positions 136-139 (NKAD) are G4. A G5 region spans residues 184-186 (SAL).

Belongs to the TRAFAC class translation factor GTPase superfamily. Classic translation factor GTPase family. EF-Tu/EF-1A subfamily. As to quaternary structure, monomer.

The protein resides in the cytoplasm. The catalysed reaction is GTP + H2O = GDP + phosphate + H(+). GTP hydrolase that promotes the GTP-dependent binding of aminoacyl-tRNA to the A-site of ribosomes during protein biosynthesis. The protein is Elongation factor Tu of Saccharophagus degradans (strain 2-40 / ATCC 43961 / DSM 17024).